We begin with the raw amino-acid sequence, 367 residues long: Zinc transport system membrane protein TroD (367 aa).

9 helical membrane passes run 5–25 (VVLI…FLVL), 28–48 (ISLM…LGYF), 56–76 (FVPF…AELL), 87–107 (AVGL…SLYA), 140–160 (SLVQ…LFFK), 170–190 (VLAT…MLAV), 201–221 (VGAV…LLLT), 224–244 (LLLM…SGLF), and 251–271 (GSIA…VYLF).

It belongs to the ABC-3 integral membrane protein family.

The protein resides in the cell membrane. Part of an ATP-driven transport system TroABCD for zinc. In Treponema pallidum (strain Nichols), this protein is Zinc transport system membrane protein TroD (troD).